The sequence spans 574 residues: Regulatory protein NPR4 (574 aa).

Residues 1–21 (MAATAIEPSSSISFTSSHLSN) are disordered. Over residues 9–20 (SSSISFTSSHLS) the composition is skewed to low complexity. Position 11 is a phosphoserine (serine 11). In terms of domain architecture, BTB spans 54–130 (TDAEIIIEEE…IYTGRLKPFP (77 aa)). The segment at 133 to 147 (VSTCVDSVCAHDSCK) adopts a C2HC NPR-type zinc-finger fold. Zn(2+) contacts are provided by cysteine 136, cysteine 141, histidine 143, and cysteine 146. 3 ANK repeats span residues 252 to 280 (ERTG…DITL), 281 to 311 (DQAN…DVNF), and 315 to 344 (RGYT…NASD). The salicylic acid-binding core (SBC) stretch occupies residues 373–516 (EPSKYRLCID…MDQYMDEEIP (144 aa)). Position 419 (arginine 419) interacts with salicylate. A disordered region spans residues 521-574 (PEKGTVKERRQKRMRYNELKNDVKKAYSKDKVARSCLSSSSPASSLREALENPT). The segment covering 535 to 553 (RYNELKNDVKKAYSKDKVA) has biased composition (basic and acidic residues). The segment covering 554-567 (RSCLSSSSPASSLR) has biased composition (low complexity).

This sequence belongs to the plant 'ANKYRIN-BTB/POZ' family. 'NPR1-like' subfamily. As to quaternary structure, forms homodimers, homotetramers and heterodimers with NPR3 in the presence of salicylic acid (SA). Interacts with TGA2, TGA3, TGA5, TGA6 and TGA7. Interacts with CUL3A, a core component of the cullin-RING ubiquitin ligases (CRL). Binds to NPR1; this interaction is disrupted by association with SA, probably due to conformational changes.

The protein localises to the nucleus. The protein operates within protein modification; protein ubiquitination. In terms of biological role, salicylic acid (SA)-binding substrate-specific adapter of an E3 ubiquitin-protein ligase complex (CUL3-RBX1-BTB) which mediates the ubiquitination and subsequent proteasomal degradation of NPR1 in the absence of SA. Together with NPR3, acts as receptor of salicylic acid to monitor immunity in a NPR1-dependent manner and induce systemic acquired resistance (SAR). Involved in the regulation of basal defense responses against pathogens, and may be implicated in the cross-talk between the SA- and JA-dependent signaling pathways. The sequence is that of Regulatory protein NPR4 from Arabidopsis thaliana (Mouse-ear cress).